A 119-amino-acid chain; its full sequence is MAKHVTTREKRRARIRRKISGTELRPRLTIYKSLKHMYAQLVDDVAGKTLVSVATTSKSLKGELGDEDKTAAAKKVGEALAKAAKAKGIEQVVFDRNGFDYHGRVEAVAAAAREAGLKF.

Belongs to the universal ribosomal protein uL18 family. Part of the 50S ribosomal subunit; part of the 5S rRNA/L5/L18/L25 subcomplex. Contacts the 5S and 23S rRNAs.

Its function is as follows. This is one of the proteins that bind and probably mediate the attachment of the 5S RNA into the large ribosomal subunit, where it forms part of the central protuberance. This Anaeromyxobacter dehalogenans (strain 2CP-1 / ATCC BAA-258) protein is Large ribosomal subunit protein uL18.